Here is a 430-residue protein sequence, read N- to C-terminus: Bifunctional protein GlmU (430 aa).

Residues 1–227 (MISKTHTFVI…GEEATGINNR (227 aa)) form a pyrophosphorylase region. UDP-N-acetyl-alpha-D-glucosamine contacts are provided by residues Lys-25, Gln-74, 79–80 (GT), 104–106 (YGD), Gly-140, Glu-154, Asn-168, and Asn-225. Asp-106 provides a ligand contact to Mg(2+). Mg(2+) is bound at residue Asn-225. Residues 228-248 (NDLIKAEFYFQENKRKIFTDS) form a linker region. The N-acetyltransferase stretch occupies residues 249–430 (GVTLVAPETV…REKQVTKRIK (182 aa)). Positions 314 and 332 each coordinate UDP-N-acetyl-alpha-D-glucosamine. The Proton acceptor role is filled by His-344. Residues Tyr-347 and Asn-358 each coordinate UDP-N-acetyl-alpha-D-glucosamine. Acetyl-CoA contacts are provided by residues Ala-361, 367 to 368 (NY), Ala-404, and Arg-421.

In the N-terminal section; belongs to the N-acetylglucosamine-1-phosphate uridyltransferase family. It in the C-terminal section; belongs to the transferase hexapeptide repeat family. Homotrimer. Mg(2+) serves as cofactor.

Its subcellular location is the cytoplasm. It carries out the reaction alpha-D-glucosamine 1-phosphate + acetyl-CoA = N-acetyl-alpha-D-glucosamine 1-phosphate + CoA + H(+). The catalysed reaction is N-acetyl-alpha-D-glucosamine 1-phosphate + UTP + H(+) = UDP-N-acetyl-alpha-D-glucosamine + diphosphate. Its pathway is nucleotide-sugar biosynthesis; UDP-N-acetyl-alpha-D-glucosamine biosynthesis; N-acetyl-alpha-D-glucosamine 1-phosphate from alpha-D-glucosamine 6-phosphate (route II): step 2/2. The protein operates within nucleotide-sugar biosynthesis; UDP-N-acetyl-alpha-D-glucosamine biosynthesis; UDP-N-acetyl-alpha-D-glucosamine from N-acetyl-alpha-D-glucosamine 1-phosphate: step 1/1. It participates in bacterial outer membrane biogenesis; LPS lipid A biosynthesis. In terms of biological role, catalyzes the last two sequential reactions in the de novo biosynthetic pathway for UDP-N-acetylglucosamine (UDP-GlcNAc). The C-terminal domain catalyzes the transfer of acetyl group from acetyl coenzyme A to glucosamine-1-phosphate (GlcN-1-P) to produce N-acetylglucosamine-1-phosphate (GlcNAc-1-P), which is converted into UDP-GlcNAc by the transfer of uridine 5-monophosphate (from uridine 5-triphosphate), a reaction catalyzed by the N-terminal domain. The chain is Bifunctional protein GlmU from Wolbachia pipientis wMel.